Reading from the N-terminus, the 190-residue chain is Apolipoprotein M (190 aa).

A signal peptide spans 1–17 (MFHQVWAALLYLYGLLF). 3 disulfides stabilise this stretch: Cys-23–Cys-169, Cys-95–Cys-185, and Cys-130–Cys-159. Residues Glu-138 and Arg-145 each coordinate tetradecanoate.

The protein belongs to the calycin superfamily. Lipocalin family. Highly divergent. As to quaternary structure, interacts with LRP2; LRP2 mediates APOM renal uptake and subsequent lysosomal degradation. Expressed by the liver; secreted in plasma.

It localises to the secreted. Probably involved in lipid transport. Can bind sphingosine-1-phosphate, myristic acid, palmitic acid and stearic acid, retinol, all-trans-retinoic acid and 9-cis-retinoic acid. The polypeptide is Apolipoprotein M (Apom) (Rattus norvegicus (Rat)).